The following is an 85-amino-acid chain: Cell division topological specificity factor (85 aa).

Belongs to the MinE family.

In terms of biological role, prevents the cell division inhibition by proteins MinC and MinD at internal division sites while permitting inhibition at polar sites. This ensures cell division at the proper site by restricting the formation of a division septum at the midpoint of the long axis of the cell. This is Cell division topological specificity factor from Xanthomonas campestris pv. campestris (strain 8004).